The sequence spans 405 residues: Probable tRNA sulfurtransferase (405 aa).

Positions proline 75 to threonine 183 constitute a THUMP domain. ATP is bound by residues leucine 201–methionine 202, lysine 285, glycine 307, and glutamine 316.

Belongs to the ThiI family.

It is found in the cytoplasm. The enzyme catalyses [ThiI sulfur-carrier protein]-S-sulfanyl-L-cysteine + a uridine in tRNA + 2 reduced [2Fe-2S]-[ferredoxin] + ATP + H(+) = [ThiI sulfur-carrier protein]-L-cysteine + a 4-thiouridine in tRNA + 2 oxidized [2Fe-2S]-[ferredoxin] + AMP + diphosphate. It carries out the reaction [ThiS sulfur-carrier protein]-C-terminal Gly-Gly-AMP + S-sulfanyl-L-cysteinyl-[cysteine desulfurase] + AH2 = [ThiS sulfur-carrier protein]-C-terminal-Gly-aminoethanethioate + L-cysteinyl-[cysteine desulfurase] + A + AMP + 2 H(+). It participates in cofactor biosynthesis; thiamine diphosphate biosynthesis. Its function is as follows. Catalyzes the ATP-dependent transfer of a sulfur to tRNA to produce 4-thiouridine in position 8 of tRNAs, which functions as a near-UV photosensor. Also catalyzes the transfer of sulfur to the sulfur carrier protein ThiS, forming ThiS-thiocarboxylate. This is a step in the synthesis of thiazole, in the thiamine biosynthesis pathway. The sulfur is donated as persulfide by IscS. This Methanosarcina mazei (strain ATCC BAA-159 / DSM 3647 / Goe1 / Go1 / JCM 11833 / OCM 88) (Methanosarcina frisia) protein is Probable tRNA sulfurtransferase.